We begin with the raw amino-acid sequence, 1054 residues long: Disks large-associated protein 2 (1054 aa).

Disordered regions lie at residues Glu32 to Arg87 and Ser242 to Asn301. Residues Ser242–Gly255 are compositionally biased toward polar residues. Residues His267–Glu281 are compositionally biased toward basic residues. Positions Arg289 to Asp299 are enriched in low complexity. 4 positions are modified to phosphoserine: Ser298, Ser304, Ser386, and Ser452. Disordered stretches follow at residues Gly442–Glu464 and Tyr609–Leu666. The span at Val628–Tyr641 shows a compositional bias: polar residues. Ser662, Ser665, Ser668, and Ser715 each carry phosphoserine. Residues Gln719–Gly746 are disordered. Phosphothreonine is present on Thr738. 5 positions are modified to phosphoserine: Ser740, Ser771, Ser806, Ser978, and Ser1007. Basic and acidic residues-rich tracts occupy residues Glu977–Val987 and Ile1002–Arg1020. The segment at Glu977–Arg1021 is disordered.

It belongs to the SAPAP family. As to quaternary structure, interacts with DLG1 and DLG4/PSD-95. Expressed in brain and kidney.

Its subcellular location is the cell membrane. It is found in the postsynaptic density. The protein localises to the synapse. Its function is as follows. May play a role in the molecular organization of synapses and neuronal cell signaling. Could be an adapter protein linking ion channel to the subsynaptic cytoskeleton. May induce enrichment of PSD-95/SAP90 at the plasma membrane. The polypeptide is Disks large-associated protein 2 (Homo sapiens (Human)).